We begin with the raw amino-acid sequence, 156 residues long: MPRKGPAPKRPLVNDPVYGSQLVTQLVNKVLLQGKKSLAERIVYGALEQARDNTGTDPVITLKRALDNVKPVLEVRSRRVGGATYQVPVEVRPDRSTTLALRWLVGYSRQRREKTMIERLANEILDASNGLGASVKRREDTHKMAEANRAFAHYRW.

This sequence belongs to the universal ribosomal protein uS7 family. In terms of assembly, part of the 30S ribosomal subunit. Contacts proteins S9 and S11.

Functionally, one of the primary rRNA binding proteins, it binds directly to 16S rRNA where it nucleates assembly of the head domain of the 30S subunit. Is located at the subunit interface close to the decoding center, probably blocks exit of the E-site tRNA. In Mycobacterium ulcerans (strain Agy99), this protein is Small ribosomal subunit protein uS7.